We begin with the raw amino-acid sequence, 283 residues long: NADPH-dependent 7-cyano-7-deazaguanine reductase (283 aa).

Residue 90-92 (IES) coordinates substrate. Position 92–93 (92–93 (SK)) interacts with NADPH. C190 serves as the catalytic Thioimide intermediate. D197 functions as the Proton donor in the catalytic mechanism. 229 to 230 (HE) contributes to the substrate binding site. 258–259 (RG) is an NADPH binding site.

The protein belongs to the GTP cyclohydrolase I family. QueF type 2 subfamily. As to quaternary structure, homodimer.

It is found in the cytoplasm. The catalysed reaction is 7-aminomethyl-7-carbaguanine + 2 NADP(+) = 7-cyano-7-deazaguanine + 2 NADPH + 3 H(+). It participates in tRNA modification; tRNA-queuosine biosynthesis. Its function is as follows. Catalyzes the NADPH-dependent reduction of 7-cyano-7-deazaguanine (preQ0) to 7-aminomethyl-7-deazaguanine (preQ1). In Dechloromonas aromatica (strain RCB), this protein is NADPH-dependent 7-cyano-7-deazaguanine reductase.